The primary structure comprises 527 residues: Homeobox protein NOBOX (527 aa).

Disordered stretches follow at residues 1–126 (MEPT…DLKK), 194–245 (VEKL…DVFP), 271–306 (VTPPLLSPPPIRRANLPLPLGPVQTPQVLPPMRDVP), and 488–527 (ETGSSLSKMSDEQTSSSLEQPALEEVRDKNKNSHAAGAKE). A DNA-binding region (homeobox) is located at residues 136–195 (RKKTRTLYRSDQLEELERIFQEDHYPDSDKRHEISQMVGVTPQRIMVWFQNRRAKWRKVE). The span at 194-203 (VEKLNEKETK) shows a compositional bias: basic and acidic residues. Residues 488-506 (ETGSSLSKMSDEQTSSSLE) are compositionally biased toward polar residues. Residues 511-527 (EEVRDKNKNSHAAGAKE) show a composition bias toward basic and acidic residues.

In terms of tissue distribution, specifically expressed in ovaries and testes. In ovaries, expressed in oocytes from primordial through antral follicles but not in granulosa cells, theca cells and corpora lutea.

Its subcellular location is the nucleus. Its function is as follows. Transcription factor which plays an essential role in postnatal follicle development. Binds preferentially to the DNA sequences 5'-TAATTG-3', 5'-TAGTTG-3' and 5'-TAATTA-3'. Directly regulates the transcription of POU5F1 and GDF9 during early folliculogenesis. This chain is Homeobox protein NOBOX (Nobox), found in Mus musculus (Mouse).